A 361-amino-acid chain; its full sequence is Phosphoserine aminotransferase (361 aa).

Residue Arg-43 participates in L-glutamate binding. Residues 77 to 78, Trp-103, Thr-153, Asp-173, and Gln-196 contribute to the pyridoxal 5'-phosphate site; that span reads AS. An N6-(pyridoxal phosphate)lysine modification is found at Lys-197. 238-239 is a binding site for pyridoxal 5'-phosphate; it reads NT.

It belongs to the class-V pyridoxal-phosphate-dependent aminotransferase family. SerC subfamily. In terms of assembly, homodimer. The cofactor is pyridoxal 5'-phosphate.

It is found in the cytoplasm. The catalysed reaction is O-phospho-L-serine + 2-oxoglutarate = 3-phosphooxypyruvate + L-glutamate. It catalyses the reaction 4-(phosphooxy)-L-threonine + 2-oxoglutarate = (R)-3-hydroxy-2-oxo-4-phosphooxybutanoate + L-glutamate. It functions in the pathway amino-acid biosynthesis; L-serine biosynthesis; L-serine from 3-phospho-D-glycerate: step 2/3. Its function is as follows. Catalyzes the reversible conversion of 3-phosphohydroxypyruvate to phosphoserine and of 3-hydroxy-2-oxo-4-phosphonooxybutanoate to phosphohydroxythreonine. The chain is Phosphoserine aminotransferase from Bacillus anthracis (strain A0248).